We begin with the raw amino-acid sequence, 3955 residues long: Nonribosomal peptide synthetase fmqA (3955 aa).

The adenylation 1 stretch occupies residues 293–691; the sequence is SYSELETLSL…AQACCTIRNV (399 aa). Positions 806 to 879 constitute a Carrier 1 domain; sequence THKETLIHQL…DLARLTDVVN (74 aa). O-(pantetheine 4'-phosphoryl)serine is present on Ser840. The interval 916 to 1187 is condensation 1; the sequence is QDIYPCTPLQ…IATVPLRVRL (272 aa). The interval 1371-1766 is adenylation 2; sequence TYAELGELSD…DEVEKHVYQC (396 aa). Residues 1880 to 1956 form the Carrier 2 domain; that stretch reads EPTSVAEREM…KIMSHESSLS (77 aa). An O-(pantetheine 4'-phosphoryl)serine modification is found at Ser1917. The epimerase stretch occupies residues 1970–2261; sequence FALSPIQQMF…FTTMWPVVAE (292 aa). Positions 2438–2724 are condensation 2; sequence EDIYPCSPSQ…FNPLPCRVHL (287 aa). The segment at 2906–3299 is adenylation 3; it reads TYGQLDELSS…GEVEANVQHC (394 aa). Positions 3422-3498 constitute a Carrier 3 domain; that stretch reads APSTEEEKKL…DLAKVAVPKS (77 aa). O-(pantetheine 4'-phosphoryl)serine is present on Ser3459. The tract at residues 3541 to 3805 is condensation 3; that stretch reads PGTQAQQFFI…CLNFIPLRVM (265 aa).

The protein belongs to the NRP synthetase family. As to quaternary structure, interacts with the mitogen-activated protein kinase mpkA.

It is found in the cytoplasmic vesicle. The protein operates within alkaloid biosynthesis. Nonribosomal peptide synthetase; part of the gene cluster that mediates the biosynthesis of the antitumor fumiquinazolines that confer a dual-usage capability to defend against phagocytes in the environment and animal hosts. The simplest member is fumiquinazoline F (FQF) with a 6-6-6 tricyclic core derived from anthranilic acid (Ant), tryptophan (Trp), and alanine (Ala). The trimodular NRPS fmqA is responsible for FQF formation. Modules 1, 2 and 3 of fmqA are predicted to activate and load Ant, Trp and Ala, respectively, providing for the assembly of an Ant-Trp-Ala-S-enzyme intermediate that would undergo double cyclization for chain release and generation of the tricyclic 6-6-6 product fumiquinazoline F. The presence of an E domain predicted for module 2 of fmqA is consistent with epimerization of L-Trp to D-Trp during assembly to generate the R-stereocenter at C14 of FQF. The FAD-dependent monooxygenase fmqB and the monomodular NRPS fmqC then maturate FQF to FQA. FmqB oxidizes the 2',3'-double bond of the indole side chain of FQF, and fmqC activates L-Ala as the adenylate, installs it as the pantetheinyl thioester on its carrier protein domain, and acylates the oxidized indole for subsequent intramolecular cyclization to create the 6-5-5-imidazolindolone of FQA. The FAD-linked oxidoreductase fmqD introduces a third layer of scaffold complexity by converting FQA to the spirohemiaminal FQC, presumably by catalyzing the formation of a transient imine within the pyrazinone ring. FQC subsequently converts nonenzymatically to the known cyclic aminal FQD. This chain is Nonribosomal peptide synthetase fmqA, found in Aspergillus fumigatus (strain ATCC MYA-4609 / CBS 101355 / FGSC A1100 / Af293) (Neosartorya fumigata).